The primary structure comprises 207 residues: Holliday junction branch migration complex subunit RuvA (207 aa).

The tract at residues 1–64 (MIGRLRGNLL…EDAQLLYGFN (64 aa)) is domain I. The domain II stretch occupies residues 65 to 143 (TKNERALFRE…GWGAGDLFTP (79 aa)). Residues 144-158 (ATDAAPMDDGSEFIT) form a flexible linker region. The domain III stretch occupies residues 159-207 (SPQSAVDEAVSALIALGYKPQQASKTVSQIAKPDMTSEVLIRESLKSMI).

It belongs to the RuvA family. As to quaternary structure, homotetramer. Forms an RuvA(8)-RuvB(12)-Holliday junction (HJ) complex. HJ DNA is sandwiched between 2 RuvA tetramers; dsDNA enters through RuvA and exits via RuvB. An RuvB hexamer assembles on each DNA strand where it exits the tetramer. Each RuvB hexamer is contacted by two RuvA subunits (via domain III) on 2 adjacent RuvB subunits; this complex drives branch migration. In the full resolvosome a probable DNA-RuvA(4)-RuvB(12)-RuvC(2) complex forms which resolves the HJ.

The protein localises to the cytoplasm. Functionally, the RuvA-RuvB-RuvC complex processes Holliday junction (HJ) DNA during genetic recombination and DNA repair, while the RuvA-RuvB complex plays an important role in the rescue of blocked DNA replication forks via replication fork reversal (RFR). RuvA specifically binds to HJ cruciform DNA, conferring on it an open structure. The RuvB hexamer acts as an ATP-dependent pump, pulling dsDNA into and through the RuvAB complex. HJ branch migration allows RuvC to scan DNA until it finds its consensus sequence, where it cleaves and resolves the cruciform DNA. The sequence is that of Holliday junction branch migration complex subunit RuvA from Aliivibrio fischeri (strain ATCC 700601 / ES114) (Vibrio fischeri).